A 469-amino-acid polypeptide reads, in one-letter code: ATP synthase subunit beta (469 aa).

Residue Gly-157–Thr-164 participates in ATP binding.

It belongs to the ATPase alpha/beta chains family. In terms of assembly, F-type ATPases have 2 components, CF(1) - the catalytic core - and CF(0) - the membrane proton channel. CF(1) has five subunits: alpha(3), beta(3), gamma(1), delta(1), epsilon(1). CF(0) has three main subunits: a(1), b(2) and c(9-12). The alpha and beta chains form an alternating ring which encloses part of the gamma chain. CF(1) is attached to CF(0) by a central stalk formed by the gamma and epsilon chains, while a peripheral stalk is formed by the delta and b chains.

The protein localises to the cell membrane. The catalysed reaction is ATP + H2O + 4 H(+)(in) = ADP + phosphate + 5 H(+)(out). Functionally, produces ATP from ADP in the presence of a proton gradient across the membrane. The catalytic sites are hosted primarily by the beta subunits. This is ATP synthase subunit beta from Brevibacillus brevis (strain 47 / JCM 6285 / NBRC 100599).